Consider the following 67-residue polypeptide: Inosine/xanthosine triphosphatase (67 aa).

The protein belongs to the YjjX NTPase family. In terms of assembly, homodimer. Mg(2+) serves as cofactor. It depends on Mn(2+) as a cofactor.

The catalysed reaction is XTP + H2O = XDP + phosphate + H(+). The enzyme catalyses ITP + H2O = IDP + phosphate + H(+). Phosphatase that hydrolyzes non-canonical purine nucleotides such as XTP and ITP to their respective diphosphate derivatives. Probably excludes non-canonical purines from DNA/RNA precursor pool, thus preventing their incorporation into DNA/RNA and avoiding chromosomal lesions. In Enterobacter cloacae, this protein is Inosine/xanthosine triphosphatase.